We begin with the raw amino-acid sequence, 296 residues long: UDP-N-acetylenolpyruvoylglucosamine reductase (296 aa).

Residues 18–189 enclose the FAD-binding PCMH-type domain; it reads LGGRALAEVR…TGADIVLRRG (172 aa). Arg166 is a catalytic residue. Cys218 acts as the Proton donor in catalysis. Glu289 is an active-site residue.

It belongs to the MurB family. It depends on FAD as a cofactor.

The protein localises to the cytoplasm. It carries out the reaction UDP-N-acetyl-alpha-D-muramate + NADP(+) = UDP-N-acetyl-3-O-(1-carboxyvinyl)-alpha-D-glucosamine + NADPH + H(+). Its pathway is cell wall biogenesis; peptidoglycan biosynthesis. Its function is as follows. Cell wall formation. This Nitratidesulfovibrio vulgaris (strain ATCC 29579 / DSM 644 / CCUG 34227 / NCIMB 8303 / VKM B-1760 / Hildenborough) (Desulfovibrio vulgaris) protein is UDP-N-acetylenolpyruvoylglucosamine reductase.